The primary structure comprises 468 residues: Argininosuccinate lyase (468 aa).

Belongs to the lyase 1 family. Argininosuccinate lyase subfamily.

It localises to the cytoplasm. The enzyme catalyses 2-(N(omega)-L-arginino)succinate = fumarate + L-arginine. Its pathway is amino-acid biosynthesis; L-arginine biosynthesis; L-arginine from L-ornithine and carbamoyl phosphate: step 3/3. The protein is Argininosuccinate lyase of Alkalilimnicola ehrlichii (strain ATCC BAA-1101 / DSM 17681 / MLHE-1).